The following is a 71-amino-acid chain: ATP synthase subunit c (71 aa).

2 helical membrane passes run 4–24 (IAAA…NGQV) and 47–67 (FIGV…ALIL).

Belongs to the ATPase C chain family. F-type ATPases have 2 components, F(1) - the catalytic core - and F(0) - the membrane proton channel. F(1) has five subunits: alpha(3), beta(3), gamma(1), delta(1), epsilon(1). F(0) has three main subunits: a(1), b(2) and c(10-14). The alpha and beta chains form an alternating ring which encloses part of the gamma chain. F(1) is attached to F(0) by a central stalk formed by the gamma and epsilon chains, while a peripheral stalk is formed by the delta and b chains.

It is found in the cell membrane. In terms of biological role, f(1)F(0) ATP synthase produces ATP from ADP in the presence of a proton or sodium gradient. F-type ATPases consist of two structural domains, F(1) containing the extramembraneous catalytic core and F(0) containing the membrane proton channel, linked together by a central stalk and a peripheral stalk. During catalysis, ATP synthesis in the catalytic domain of F(1) is coupled via a rotary mechanism of the central stalk subunits to proton translocation. Functionally, key component of the F(0) channel; it plays a direct role in translocation across the membrane. A homomeric c-ring of between 10-14 subunits forms the central stalk rotor element with the F(1) delta and epsilon subunits. This chain is ATP synthase subunit c, found in Enterococcus hirae (strain ATCC 9790 / DSM 20160 / JCM 8729 / LMG 6399 / NBRC 3181 / NCIMB 6459 / NCDO 1258 / NCTC 12367 / WDCM 00089 / R).